The chain runs to 230 residues: Ribosomal RNA small subunit methyltransferase I (230 aa).

The protein belongs to the methyltransferase superfamily. RsmI family.

It is found in the cytoplasm. The catalysed reaction is cytidine(1402) in 16S rRNA + S-adenosyl-L-methionine = 2'-O-methylcytidine(1402) in 16S rRNA + S-adenosyl-L-homocysteine + H(+). Functionally, catalyzes the 2'-O-methylation of the ribose of cytidine 1402 (C1402) in 16S rRNA. The protein is Ribosomal RNA small subunit methyltransferase I of Hydrogenobaculum sp. (strain Y04AAS1).